Here is a 551-residue protein sequence, read N- to C-terminus: Cysteine desulfurase SufS (551 aa).

Residues 1-22 (MRPSSAAWICLLLRIANYTCYS) form the signal peptide. Lys-327 is modified (N6-(pyridoxal phosphate)lysine). Cys-500 serves as the catalytic Cysteine persulfide intermediate.

The protein belongs to the class-V pyridoxal-phosphate-dependent aminotransferase family. Csd subfamily. In terms of assembly, monomer. Interacts with SufE; interaction enhances cysteine desulfurase activity of SufS. Requires pyridoxal 5'-phosphate as cofactor.

It is found in the plastid. It localises to the apicoplast. The enzyme catalyses (sulfur carrier)-H + L-cysteine = (sulfur carrier)-SH + L-alanine. It participates in cofactor biosynthesis; iron-sulfur cluster biosynthesis. In terms of biological role, catalyzes sulfur activation and mobilization in sulfur mobilization (SUF) pathway for iron-sulfur (Fe-S) cluster biogenesis. Active when in complex with a partner protein SufE. Required for apicoplast maintenance. Plays a role in the development of sporozoites in oocysts in mosquitoes. This is Cysteine desulfurase SufS from Plasmodium vivax.